A 493-amino-acid chain; its full sequence is EGF-containing fibulin-like extracellular matrix protein 1 (493 aa).

Residues 1-17 form the signal peptide; the sequence is MLKALFLTMLTLALVKS. The EGF-like 1; atypical domain maps to 26 to 71; sequence YTQCTDGYEWDPVRQQCKDIDECDIVPDACKGGMKCVNHYGGYLCL. One can recognise an EGF-like 2; calcium-binding domain in the interval 173–213; sequence DIDECTAGTHNCRADQVCINLRGSFACQCPPGYQKRGEQCV. Intrachain disulfides connect Cys-177–Cys-190, Cys-184–Cys-199, Cys-201–Cys-212, Cys-218–Cys-228, Cys-224–Cys-237, Cys-239–Cys-252, Cys-258–Cys-268, Cys-264–Cys-277, Cys-279–Cys-292, Cys-298–Cys-309, Cys-305–Cys-318, Cys-320–Cys-332, Cys-338–Cys-350, Cys-344–Cys-359, and Cys-365–Cys-377. The 40-residue stretch at 214–253 folds into the EGF-like 3; calcium-binding domain; that stretch reads DIDECTIPPYCHQRCVNTPGSFYCQCSPGFQLAANNYTCV. Asn-249 carries an N-linked (GlcNAc...) asparagine glycan. Residues 254–293 form the EGF-like 4; calcium-binding domain; sequence DINECDASNQCAQQCYNILGSFICQCNQGYELSSDRLNCE. A mediates interaction with TIMP3 region spans residues 259–493; sequence DASNQCAQQC…LTIIVGPFSF (235 aa). An EGF-like 5; calcium-binding domain is found at 294–333; the sequence is DIDECRTSSYLCQYQCVNEPGKFSCMCPQGYQVVRSRTCQ. The EGF-like 6; calcium-binding domain occupies 334-378; that stretch reads DINECETTNECREDEMCWNYHGGFRCYPRNPCQDPYILTPENRCV.

The protein belongs to the fibulin family. Interacts with ECM1. Interacts with TIMP3. In terms of tissue distribution, in the eye, associated with photoreceptor outer and inner segment regions, the nerve fiber layer, outer nuclear layer and inner and outer plexiform layers of the retina.

Its subcellular location is the secreted. The protein localises to the extracellular space. It localises to the extracellular matrix. Binds EGFR, the EGF receptor, inducing EGFR autophosphorylation and the activation of downstream signaling pathways. May play a role in cell adhesion and migration. May function as a negative regulator of chondrocyte differentiation. In the olfactory epithelium, it may regulate glial cell migration, differentiation and the ability of glial cells to support neuronal neurite outgrowth. This Homo sapiens (Human) protein is EGF-containing fibulin-like extracellular matrix protein 1 (EFEMP1).